A 99-amino-acid chain; its full sequence is Acylphosphatase (99 aa).

The Acylphosphatase-like domain maps to 5–97 (VRQVTVQGRV…RPGERFSTLP (93 aa)). Residues R20 and N38 contribute to the active site.

This sequence belongs to the acylphosphatase family.

It carries out the reaction an acyl phosphate + H2O = a carboxylate + phosphate + H(+). The chain is Acylphosphatase (acyP) from Rhodopseudomonas palustris (strain BisB18).